The following is a 151-amino-acid chain: Glycosylation-dependent cell adhesion molecule 1 (151 aa).

A signal peptide spans 1–19 (MKFFTVLLFVSLAATSLAL). The tract at residues 29 to 123 (MKTQPTDAIP…ENLTKSSQTV (95 aa)) is disordered. A compositionally biased stretch (low complexity) spans 42–52 (STPTSYTSEES). The segment covering 53-71 (TSSKDLSKEPSIFREELIS) has biased composition (basic and acidic residues). Phosphoserine occurs at positions 54, 59, 63, and 71. Over residues 103 to 114 (RPTTSAATTSEE) the composition is skewed to low complexity. The N-linked (GlcNAc...) asparagine glycan is linked to Asn115.

Belongs to the PP3/GlyCAM-1 family. In terms of processing, extensively O-glycosylated. In terms of tissue distribution, lymph nodes. Associated with the lumenal surface of the high endothelial venules of peripheral lymph nodes.

The protein localises to the cell membrane. In terms of biological role, adhesion molecule that accomplishes cell binding by presenting carbohydrate(s) to the lectin domain of L-selectin. In Mus musculus (Mouse), this protein is Glycosylation-dependent cell adhesion molecule 1 (Glycam1).